We begin with the raw amino-acid sequence, 127 residues long: UPF0325 protein VP2321 (127 aa).

Belongs to the UPF0325 family.

This chain is UPF0325 protein VP2321, found in Vibrio parahaemolyticus serotype O3:K6 (strain RIMD 2210633).